The chain runs to 206 residues: MAKVKVCGITSVEDALVAAGAGADAVGFVFFERSPRRVGVERAREISGALPGGVLRVGVFVNTPPEEVLRVASLVGLDYAQLHGDEGPEEVRRVREGGLGVIKALRVRDAGSLSEIERYPEADLFLLDAWREGLYGGTGTPFDWELAKRLRGCANIVVSGGLTPENVRAAIERLDPYGVDASSSLEEAPGKKSGELVRRFVSAAKS.

This sequence belongs to the TrpF family.

The enzyme catalyses N-(5-phospho-beta-D-ribosyl)anthranilate = 1-(2-carboxyphenylamino)-1-deoxy-D-ribulose 5-phosphate. The protein operates within amino-acid biosynthesis; L-tryptophan biosynthesis; L-tryptophan from chorismate: step 3/5. The polypeptide is N-(5'-phosphoribosyl)anthranilate isomerase (Rubrobacter xylanophilus (strain DSM 9941 / JCM 11954 / NBRC 16129 / PRD-1)).